Here is a 252-residue protein sequence, read N- to C-terminus: 3-dehydroquinate dehydratase (252 aa).

Residues serine 21, 46–48, and arginine 82 contribute to the 3-dehydroquinate site; that span reads EWR. The Proton donor/acceptor role is filled by histidine 143. The active-site Schiff-base intermediate with substrate is the lysine 170. Residues arginine 213, serine 232, and glutamine 236 each coordinate 3-dehydroquinate.

Belongs to the type-I 3-dehydroquinase family. In terms of assembly, homodimer.

It catalyses the reaction 3-dehydroquinate = 3-dehydroshikimate + H2O. The protein operates within metabolic intermediate biosynthesis; chorismate biosynthesis; chorismate from D-erythrose 4-phosphate and phosphoenolpyruvate: step 3/7. Its function is as follows. Involved in the third step of the chorismate pathway, which leads to the biosynthesis of aromatic amino acids. Catalyzes the cis-dehydration of 3-dehydroquinate (DHQ) and introduces the first double bond of the aromatic ring to yield 3-dehydroshikimate. The protein is 3-dehydroquinate dehydratase of Escherichia coli (strain 55989 / EAEC).